Consider the following 754-residue polypeptide: FAD-dependent monooxygenase ntnA (754 aa).

Residues 3–23 traverse the membrane as a helical segment; sequence IPFKVLIIGGGVAGLTLAIML. The FAD site is built by glutamate 34, glycine 48, and arginine 109. Residue tyrosine 218 is part of the active site. Aspartate 311 and alanine 324 together coordinate FAD. A run of 4 helical transmembrane segments spans residues 446-466, 486-506, 536-556, and 563-583; these read PLAT…PWLA, AEVL…MWVI, ILPI…YYYM, and LGVA…SAVC. A glycan (N-linked (GlcNAc...) asparagine) is linked at asparagine 586. A helical transmembrane segment spans residues 595-615; that stretch reads SWWFTADFAFPVVAYLSGMFL. N-linked (GlcNAc...) asparagine glycosylation is present at asparagine 616. 2 helical membrane passes run 644 to 664 and 679 to 697; these read IAFV…TTIL and LASL…AWEL. An N-linked (GlcNAc...) asparagine glycan is attached at asparagine 701. The chain crosses the membrane as a helical span at residues 712–732; it reads LTILSSTIFGGPAATLAGTFI.

It belongs to the paxM FAD-dependent monooxygenase family. Requires FAD as cofactor.

It localises to the membrane. It participates in secondary metabolite biosynthesis; terpenoid biosynthesis. Its function is as follows. FAD-dependent monooxygenase; part of the gene cluster that mediates the biosynthesis of the meroterpenoids nectripenoids A and B, as well as cochliquninone D and isocochliquninone E. The pathway probably begins with the HR-PKS ntnH that catalyzes two chain-extension steps to form a reduced triketide, which then primes the SAT domain in the NR-PKS ntnG to initiate three more cycles of extension to give a linear hexaketide corresponding to the polyketide part of nectripenoids. The FAD-dependent monooxygenase ntnJ then performs an oxidative decarboxylation at C11 of the ntnH/ntnG product, via an electrophilic aromatic hydroxylation with concomitant ipso-decarboxylation. The membrane-bound polyprenyl transferase ntnF then introduces a farnesyl group before the FAD-dependent monooxygenase ntnK functions as the first epoxidase on terminal C12'-C13' olefin, followed by a second epoxidation on C7'-C8' catalyzed by ntnA. The terpene cyclase/mutase ntnI then initiates the sequential tricyclic ring formation through protonation of the terminal epoxide and catalyzes the regioselective and stereoselective 6/6/6-tricyclic ring formation. The cytochrome P450 monooxygenase ntnM may then hydroxylate C1'. This is FAD-dependent monooxygenase ntnA from Nectria sp.